Here is an 81-residue protein sequence, read N- to C-terminus: Photosystem I iron-sulfur center (81 aa).

2 consecutive 4Fe-4S ferredoxin-type domains span residues 2 to 31 (SHSVKIYDTCIGCTQCVRACPTDVLEMIPW) and 39 to 68 (IASAPRTEDCVGCKRCESACPTDFLSVRVY). 8 residues coordinate [4Fe-4S] cluster: Cys-11, Cys-14, Cys-17, Cys-21, Cys-48, Cys-51, Cys-54, and Cys-58.

In terms of assembly, the eukaryotic PSI reaction center is composed of at least 11 subunits. [4Fe-4S] cluster serves as cofactor.

The protein localises to the plastid. It localises to the chloroplast thylakoid membrane. The enzyme catalyses reduced [plastocyanin] + hnu + oxidized [2Fe-2S]-[ferredoxin] = oxidized [plastocyanin] + reduced [2Fe-2S]-[ferredoxin]. Apoprotein for the two 4Fe-4S centers FA and FB of photosystem I (PSI); essential for photochemical activity. FB is the terminal electron acceptor of PSI, donating electrons to ferredoxin. The C-terminus interacts with PsaA/B/D and helps assemble the protein into the PSI complex. Required for binding of PsaD and PsaE to PSI. PSI is a plastocyanin-ferredoxin oxidoreductase, converting photonic excitation into a charge separation, which transfers an electron from the donor P700 chlorophyll pair to the spectroscopically characterized acceptors A0, A1, FX, FA and FB in turn. This Helianthus annuus (Common sunflower) protein is Photosystem I iron-sulfur center.